A 257-amino-acid chain; its full sequence is UPF0246 protein Ssed_1188 (257 aa).

This sequence belongs to the UPF0246 family.

The polypeptide is UPF0246 protein Ssed_1188 (Shewanella sediminis (strain HAW-EB3)).